The sequence spans 304 residues: DnaJ homolog subfamily C member 17 (304 aa).

In terms of domain architecture, J spans 11 to 76 (DLYALLGIEE…AARAAYDKVR (66 aa)). Positions 79–106 (KKQAAERTQKLDEKRKKVKLDLEARERQ) are enriched in basic and acidic residues. The segment at 79–145 (KKQAAERTQK…SRQLEEQQRL (67 aa)) is disordered. A Phosphoserine modification is found at serine 112. A compositionally biased stretch (basic and acidic residues) spans 118-145 (SRSTRTLEQEIERLREEGSRQLEEQQRL). In terms of domain architecture, RRM spans 178–249 (KCKKEDESKG…NPLKISWLEG (72 aa)). Residue lysine 264 is modified to N6-methyllysine.

The protein localises to the cytoplasm. It localises to the nucleus. May negatively affect PAX8-induced thyroglobulin/TG transcription. The protein is DnaJ homolog subfamily C member 17 (DNAJC17) of Homo sapiens (Human).